A 142-amino-acid polypeptide reads, in one-letter code: Baculoviral IAP repeat-containing protein 5 (142 aa).

The stretch at 18–88 (RVSTFKNWPF…KHSSGCAFLS (71 aa)) is one BIR repeat. S20 carries the phosphoserine; by AURKC modification. Position 23 is an N6-acetyllysine (K23). The residue at position 34 (T34) is a Phosphothreonine; by CDK1 and CDK15. T48 carries the post-translational modification Phosphothreonine; by CK2; in vitro. 4 residues coordinate Zn(2+): C57, C60, H77, and C84. An N6-acetyllysine mark is found at K90, K110, K112, and K115. Position 117 is a phosphothreonine; by AURKB (T117).

It belongs to the IAP family. As to quaternary structure, monomer or homodimer. Exists as a homodimer in the apo state and as a monomer in the CPC-bound state. The monomer protects cells against apoptosis more efficiently than the dimer. Only the dimeric form is capable of enhancing tubulin stability in cells. When phosphorylated, interacts with LAMTOR5/HBXIP; the resulting complex binds pro-CASP9, as well as active CASP9, but much less efficiently. Component of the chromosomal passenger complex (CPC) composed of at least BIRC5/survivin, CDCA8/borealin, INCENP, AURKB or AURKC; in the complex forms a triple-helix bundle-based subcomplex with INCENP and CDCA8. Interacts with JTB. Interacts (via BIR domain) with histone H3 phosphorylated at 'Thr-3' (H3pT3). Interacts with EVI5. Interacts with GTP-bound RAN in both the S and M phases of the cell cycle. Interacts with USP9X. Interacts with tubulin. Interacts with BIRC2/c-IAP1. The monomeric form interacts with XIAP/BIRC4. Both the dimeric and monomeric form can interact with DIABLO/SMAC. Interacts with BIRC6/bruce. Interacts with FBXL7; this interaction facilitates the polyubiquitination and subsequent proteasomal degradation of BIRC5 by the SCF(FBXL7) E3 ubiquitin-protein ligase complex. Post-translationally, ubiquitinated by the Cul9-RING ubiquitin-protein ligase complex, leading to its degradation. Ubiquitination is required for centrosomal targeting. Deubiquitinated by USP35 or USP38; leading to stabilization. In vitro phosphorylation at Thr-117 by AURKB prevents interaction with INCENP and localization to mitotic chromosomes. Phosphorylation at Thr-48 by CK2 is critical for its mitotic and anti-apoptotic activities. Phosphorylation at Thr-34 by CDK15 is critical for its anti-apoptotic activity. Phosphorylation at Ser-20 by AURKC is critical for regulation of proper chromosome alignment and segregation, and possibly cytokinesis. Expressed in spleen, lung, brain, heart, kidney and intestine (at protein level). Expressed in cochlea including the organ of Corti, the lateral wall, the interdental cells of the Limbus as well as in cells of the cochlear nerve and the spiral ganglions (at protein level). Also expressed in Schwann cells (at protein level). Not expressed in cells of the inner and outer sulcus or the Reissner's membrane (at protein level).

It localises to the cytoplasm. The protein resides in the nucleus. It is found in the chromosome. Its subcellular location is the centromere. The protein localises to the cytoskeleton. It localises to the spindle. The protein resides in the kinetochore. It is found in the midbody. Its function is as follows. Multitasking protein that has dual roles in promoting cell proliferation and preventing apoptosis. Component of a chromosome passage protein complex (CPC) which is essential for chromosome alignment and segregation during mitosis and cytokinesis. Acts as an important regulator of the localization of this complex; directs CPC movement to different locations from the inner centromere during prometaphase to midbody during cytokinesis and participates in the organization of the center spindle by associating with polymerized microtubules. Involved in the recruitment of CPC to centromeres during early mitosis via association with histone H3 phosphorylated at 'Thr-3' (H3pT3) during mitosis. The complex with RAN plays a role in mitotic spindle formation by serving as a physical scaffold to help deliver the RAN effector molecule TPX2 to microtubules. May counteract a default induction of apoptosis in G2/M phase. The acetylated form represses STAT3 transactivation of target gene promoters. May play a role in neoplasia. Inhibitor of CASP3 and CASP7. Essential for the maintenance of mitochondrial integrity and function. This chain is Baculoviral IAP repeat-containing protein 5, found in Cavia porcellus (Guinea pig).